A 213-amino-acid polypeptide reads, in one-letter code: MAGAMRKMAVYLGLVEDDGYDGRGFDPDDDFEPELDPEPERDHRRHEPAHQSHGAHQSQRDEEVRVVQPPAQREPMPRAASLAAESSRPARIAPVASITQERASLEKSAPVIMPKVVSEREPYRITTLHPRTYNEARTIGEHFREGTPVIMNLTEMDDTDAKRLVDFAAGLVFGLHGSIERVTQKVFLLSPANVDVTAEDKARIAEGGFFNQS.

The interval 16–89 (EDDGYDGRGF…ASLAAESSRP (74 aa)) is disordered. The segment covering 27-39 (PDDDFEPELDPEP) has biased composition (acidic residues).

It belongs to the SepF family. As to quaternary structure, homodimer. Interacts with FtsZ.

The protein resides in the cytoplasm. Functionally, cell division protein that is part of the divisome complex and is recruited early to the Z-ring. Probably stimulates Z-ring formation, perhaps through the cross-linking of FtsZ protofilaments. Its function overlaps with FtsA. The polypeptide is Cell division protein SepF 2 (Streptomyces coelicolor (strain ATCC BAA-471 / A3(2) / M145)).